Reading from the N-terminus, the 487-residue chain is Bifunctional protein GlmU (487 aa).

Positions Met1–Arg235 are pyrophosphorylase. UDP-N-acetyl-alpha-D-glucosamine contacts are provided by residues Leu13–Gly16, Lys27, Gln82, Gly87–Thr88, Ser110–Asp112, Gly147, Glu162, Asn177, and Asn233. A Mg(2+)-binding site is contributed by Asp112. Mg(2+) is bound at residue Asn233. A linker region spans residues Glu236–Ser256. The segment at Gly257–Ser487 is N-acetyltransferase. The UDP-N-acetyl-alpha-D-glucosamine site is built by Arg339 and Lys357. His369 functions as the Proton acceptor in the catalytic mechanism. UDP-N-acetyl-alpha-D-glucosamine is bound by residues Tyr372 and Asn383. Acetyl-CoA-binding positions include Ala386, Asn392–Tyr393, Ser411, Ala429, and Arg446. The segment at Glu453 to Ser487 is disordered. Residues Ala468 to Pro481 are compositionally biased toward low complexity.

This sequence in the N-terminal section; belongs to the N-acetylglucosamine-1-phosphate uridyltransferase family. The protein in the C-terminal section; belongs to the transferase hexapeptide repeat family. In terms of assembly, homotrimer. It depends on Mg(2+) as a cofactor.

The protein resides in the cytoplasm. The enzyme catalyses alpha-D-glucosamine 1-phosphate + acetyl-CoA = N-acetyl-alpha-D-glucosamine 1-phosphate + CoA + H(+). It carries out the reaction N-acetyl-alpha-D-glucosamine 1-phosphate + UTP + H(+) = UDP-N-acetyl-alpha-D-glucosamine + diphosphate. The protein operates within nucleotide-sugar biosynthesis; UDP-N-acetyl-alpha-D-glucosamine biosynthesis; N-acetyl-alpha-D-glucosamine 1-phosphate from alpha-D-glucosamine 6-phosphate (route II): step 2/2. Its pathway is nucleotide-sugar biosynthesis; UDP-N-acetyl-alpha-D-glucosamine biosynthesis; UDP-N-acetyl-alpha-D-glucosamine from N-acetyl-alpha-D-glucosamine 1-phosphate: step 1/1. It participates in bacterial outer membrane biogenesis; LPS lipid A biosynthesis. Catalyzes the last two sequential reactions in the de novo biosynthetic pathway for UDP-N-acetylglucosamine (UDP-GlcNAc). The C-terminal domain catalyzes the transfer of acetyl group from acetyl coenzyme A to glucosamine-1-phosphate (GlcN-1-P) to produce N-acetylglucosamine-1-phosphate (GlcNAc-1-P), which is converted into UDP-GlcNAc by the transfer of uridine 5-monophosphate (from uridine 5-triphosphate), a reaction catalyzed by the N-terminal domain. This chain is Bifunctional protein GlmU, found in Anaeromyxobacter sp. (strain Fw109-5).